Reading from the N-terminus, the 859-residue chain is Leucine--tRNA ligase (859 aa).

Residues 42-52 (PYPSGRLHMGH) carry the 'HIGH' region motif. Residues 618 to 622 (KMSKS) carry the 'KMSKS' region motif. Lys-621 is an ATP binding site.

Belongs to the class-I aminoacyl-tRNA synthetase family.

Its subcellular location is the cytoplasm. The catalysed reaction is tRNA(Leu) + L-leucine + ATP = L-leucyl-tRNA(Leu) + AMP + diphosphate. This is Leucine--tRNA ligase from Shewanella oneidensis (strain ATCC 700550 / JCM 31522 / CIP 106686 / LMG 19005 / NCIMB 14063 / MR-1).